A 242-amino-acid chain; its full sequence is Protein HTATIP2 (242 aa).

The residue at position 2 (Ala-2) is an N-acetylalanine. The segment at 2–25 (ADKETLLKLREDFKMQNKSVFILG) is required for interaction with elongation factor EEF1A1. The NADPH site is built by Ser-27, Gly-28, Glu-29, Thr-30, Arg-52, Arg-53, Leu-92, Gly-93, Tyr-143, Lys-147, Leu-170, and Arg-178. Tyr-143 serves as the catalytic Proton acceptor. Lys-147 is an active-site residue.

In terms of assembly, monomer. Forms homodimers during oxidative stress. Interacts (via N-terminus) with elongation factor EEF1A1 (via middle-region); the interaction is direct and competes with EEF1A1 binding to guanyl-nucleotide exchange factor EEF1B2, thereby inhibiting GDP for GTP exchange and reactivation of EEF1A1. Interacts with nuclear transport receptors XPO4, IPO5/RANBP5, IPO7, IPO9 and KPNB1 as well as GCN1L1/GCN1 and LRPPRC probably through their HEAT repeats. Binds NCOA5/CIA.

Its function is as follows. Represses translation by preventing reactivation of elongation factor eEF1A. May also inhibit nuclear import by competing with nuclear import substrates for binding to a subset of nuclear transport receptors. Has additionally been proposed to act as a redox sensor involved in cellular oxidative stress surveillance. May bind NADPH. This is Protein HTATIP2 from Rattus norvegicus (Rat).